We begin with the raw amino-acid sequence, 130 residues long: Small ribosomal subunit protein uS8 (130 aa).

Belongs to the universal ribosomal protein uS8 family. Part of the 30S ribosomal subunit.

In terms of biological role, one of the primary rRNA binding proteins, it binds directly to 16S rRNA central domain where it helps coordinate assembly of the platform of the 30S subunit. The polypeptide is Small ribosomal subunit protein uS8 (Pyrobaculum calidifontis (strain DSM 21063 / JCM 11548 / VA1)).